The primary structure comprises 275 residues: MVGKNNSNHLPPGFRFHPTDEELIMYYLRNQATSKPCPSSIIPEVDVYKFDPWELPEKTEFGEKEWYFFTPRDRKYPNGVRPNRAAVSGYWKATGTDKGIYSGTKYVGIKKALVFYKGKPPKGIKTDWIMHEYRLSESRTQPTRPNGSMRLDDWVLCRIYKKKNLERAIEMMKVEEDTQEPQIMSVTNPIHEVVASNGQQTLKLPRTCSLSHLLEMDYFGSISQLFDDNNSYNTISQNNTLMTNVNGYVMPHQAMEKFQLGEVSQISMNPSYQFQ.

The 153-residue stretch at 10 to 162 (LPPGFRFHPT…DWVLCRIYKK (153 aa)) folds into the NAC domain. Residues 107 to 168 (VGIKKALVFY…IYKKKNLERA (62 aa)) mediate DNA binding.

Expressed in roots, stem, flowers, and leaves.

The protein resides in the nucleus. Transcription factor that binds DNA motifs 5'-CGT[AG](5N)NACG[ACT][AC][AT][ACG][ACT]-3' and 5'-CACG[ACT][AC][AT][AGT][CT]-3' in target genes promoters. Promotes leaf senescence (developmental, light-induced and ABA-induced senescence) and regulates fruit yield and sugar content, probably by establishing abscisic acid (ABA) homeostasis. Activates the expression of senescence and ABA associated genes including NCED1, ABCG40, CYP707A2, SAG113, SGR1 and PAO, by directly binding to their promoters. The polypeptide is NAC domain-containing protein 2 (Solanum lycopersicum (Tomato)).